We begin with the raw amino-acid sequence, 492 residues long: Catalase-1 (492 aa).

Catalysis depends on residues His65 and Asn138. Tyr348 contacts heme.

Belongs to the catalase family. Homotetramer. The cofactor is heme.

The protein resides in the peroxisome. Its subcellular location is the glyoxysome. It carries out the reaction 2 H2O2 = O2 + 2 H2O. Occurs in almost all aerobically respiring organisms and serves to protect cells from the toxic effects of hydrogen peroxide. This chain is Catalase-1 (CAT1), found in Triticum aestivum (Wheat).